Here is a 455-residue protein sequence, read N- to C-terminus: 3-phosphoshikimate 1-carboxyvinyltransferase (455 aa).

Residues 1-19 are compositionally biased toward polar residues; it reads MSHGASSRPATARKSSGLS. The disordered stretch occupies residues 1–25; that stretch reads MSHGASSRPATARKSSGLSGTVRIP. Lys28 lines the phosphoenolpyruvate pocket. Positions 29 and 33 each coordinate 3-phosphoshikimate. Phosphoenolpyruvate is bound at residue Arg128. 3-phosphoshikimate is bound by residues Ser173, Ala174, Gln175, Asp326, and Lys353. Position 175 (Gln175) interacts with phosphoenolpyruvate. Asp326 acts as the Proton acceptor in catalysis. Residues Arg357 and Arg405 each contribute to the phosphoenolpyruvate site.

This sequence belongs to the EPSP synthase family. As to quaternary structure, monomer.

Its subcellular location is the cytoplasm. The enzyme catalyses 3-phosphoshikimate + phosphoenolpyruvate = 5-O-(1-carboxyvinyl)-3-phosphoshikimate + phosphate. It participates in metabolic intermediate biosynthesis; chorismate biosynthesis; chorismate from D-erythrose 4-phosphate and phosphoenolpyruvate: step 6/7. Its activity is regulated as follows. Is resistant to inhibition by glyphosate (glyphosate-tolerant) like other members of class II EPSPS, in contrast to class I EPSPS, which is glyphosate-sensitive. Is much less sensitive to inhibition by the (R)-difluoromethyl and (R)-phosphonate analogs of the tetrahedral reaction intermediate than the representative class I EPSPS from E.coli. Is highly activated in the presence of cations, such as NH4(+), Rb(+), and K(+). Catalyzes the transfer of the enolpyruvyl moiety of phosphoenolpyruvate (PEP) to the 5-hydroxyl of shikimate-3-phosphate (S3P) to produce enolpyruvyl shikimate-3-phosphate and inorganic phosphate. The sequence is that of 3-phosphoshikimate 1-carboxyvinyltransferase from Agrobacterium sp. (strain CP4).